A 247-amino-acid chain; its full sequence is Ribosomal RNA large subunit methyltransferase E (247 aa).

The disordered stretch occupies residues 1-21 (MKVNPKNSPKDNLKDSPKVSA). Over residues 8 to 17 (SPKDNLKDSP) the composition is skewed to basic and acidic residues. S-adenosyl-L-methionine contacts are provided by G80, W82, D108, D124, and D153. Residue K193 is the Proton acceptor of the active site.

This sequence belongs to the class I-like SAM-binding methyltransferase superfamily. RNA methyltransferase RlmE family.

The protein localises to the cytoplasm. The catalysed reaction is uridine(2552) in 23S rRNA + S-adenosyl-L-methionine = 2'-O-methyluridine(2552) in 23S rRNA + S-adenosyl-L-homocysteine + H(+). In terms of biological role, specifically methylates the uridine in position 2552 of 23S rRNA at the 2'-O position of the ribose in the fully assembled 50S ribosomal subunit. The chain is Ribosomal RNA large subunit methyltransferase E from Polaromonas sp. (strain JS666 / ATCC BAA-500).